Reading from the N-terminus, the 151-residue chain is Protein NrdI (151 aa).

The protein belongs to the NrdI family.

Probably involved in ribonucleotide reductase function. This is Protein NrdI from Mycoplasmopsis pulmonis (strain UAB CTIP) (Mycoplasma pulmonis).